The sequence spans 267 residues: U6 snRNA phosphodiesterase 1 (267 aa).

The tract at residues 1 to 72 (MNAAPLVGYS…EDDSARHGGR (72 aa)) is disordered. Catalysis depends on His-122, which acts as the Proton acceptor. Residue 122-124 (HLS) coordinates AMP. UMP contacts are provided by residues Gln-166, Tyr-204, and 208-212 (SFHVS). Residues Tyr-204 and 206–212 (DPSFHVS) contribute to the AMP site. The active-site Proton donor is the His-210.

This sequence belongs to the 2H phosphoesterase superfamily. USB1 family. As to quaternary structure, interacts with PLRG1, CDC5L and PRPF19.

The protein resides in the nucleus. It catalyses the reaction a 3'-end uridylyl-uridine-RNA = a 3'-end 2',3'-cyclophospho-uridine-RNA + uridine. The enzyme catalyses a 3'-end uridylyl-adenosine-RNA = a 3'-end 2',3'-cyclophospho-uridine-RNA + adenosine. 3'-5' RNA exonuclease that trims the 3' end of oligo(U) and oligo(A) tracts of the pre-U6 small nuclear RNA (snRNA) molecule, leading to the formation of a mature U6 snRNA 3' end-terminated with a 2',3'-cyclic phosphate. Participates in the U6 snRNA 3' end processing that prevents U6 snRNA degradation. In addition also removes uridines from the 3' end of U6atac snRNA and possibly the vault RNA VTRNA1-1. The protein is U6 snRNA phosphodiesterase 1 of Rattus norvegicus (Rat).